A 232-amino-acid polypeptide reads, in one-letter code: Ribosomal RNA large subunit methyltransferase E (232 aa).

S-adenosyl-L-methionine is bound by residues Gly-64, Trp-66, Asp-97, Asp-113, and Asp-138. The active-site Proton acceptor is Lys-178.

The protein belongs to the class I-like SAM-binding methyltransferase superfamily. RNA methyltransferase RlmE family.

The protein localises to the cytoplasm. The enzyme catalyses uridine(2552) in 23S rRNA + S-adenosyl-L-methionine = 2'-O-methyluridine(2552) in 23S rRNA + S-adenosyl-L-homocysteine + H(+). Specifically methylates the uridine in position 2552 of 23S rRNA at the 2'-O position of the ribose in the fully assembled 50S ribosomal subunit. The polypeptide is Ribosomal RNA large subunit methyltransferase E (Leptothrix cholodnii (strain ATCC 51168 / LMG 8142 / SP-6) (Leptothrix discophora (strain SP-6))).